The primary structure comprises 293 residues: MPWIQLRIDTDGPNADAISDQLMEEGSLSITFEDGKDNPIYEPTLGETPLWSHTVIVALFEANFDLTPVVERLKLLPCLGDNFSHKVEQVEDKDWEREWMDNFHPIKFGDRLWICPSWREIPDPTAVNVILDPGLAFGTGTHPTTALCLEWLDGLDYSNKDVIDFGCGSGILAVAALKLGAERVTGIDIDYQAIEASKANAERNGVEDKLALYLPEDQPADLLADILVANILAGPLRELAPLIAEKVKPGGLLALSGLLQEQAEEISAFYSEWFNMDEPAHKDDWSRLTGIRK.

Residues T145, G166, D188, and N230 each coordinate S-adenosyl-L-methionine.

The protein belongs to the methyltransferase superfamily. PrmA family.

It localises to the cytoplasm. The enzyme catalyses L-lysyl-[protein] + 3 S-adenosyl-L-methionine = N(6),N(6),N(6)-trimethyl-L-lysyl-[protein] + 3 S-adenosyl-L-homocysteine + 3 H(+). Methylates ribosomal protein L11. This is Ribosomal protein L11 methyltransferase from Shewanella pealeana (strain ATCC 700345 / ANG-SQ1).